An 808-amino-acid chain; its full sequence is Phospholipase D alpha 1 (808 aa).

In terms of domain architecture, C2 spans 1 to 125; the sequence is MSKVLLHGTL…LDGDEVDKWI (125 aa). Ca(2+) is bound at residue Asp-186. In terms of domain architecture, PLD phosphodiesterase 1 spans 326–364; the sequence is TMFTHHQKIVVVDHELPRGGSQKRRVMSFVGGIDLCDGR. Catalysis depends on residues His-331, Lys-333, and Asp-338. Position 331 (His-331) interacts with a 1,2-diacyl-sn-glycero-3-phosphate. The Ca(2+) site is built by His-370 and His-404. 2 residues coordinate a 1,2-diacyl-sn-glycero-3-phosphate: Gln-520 and His-659. In terms of domain architecture, PLD phosphodiesterase 2 spans 654–681; the sequence is FMIYVHSKMMIVDDEYIIVGSANINQRS. Residues His-659, Lys-661, and Asp-666 contribute to the active site. Glu-720 contacts Ca(2+).

Belongs to the phospholipase D family. C2-PLD subfamily. As to quaternary structure, interacts (via C2 domain) with CARDA (via RGD or KGE motifs). Requires Ca(2+) as cofactor.

The enzyme catalyses a 1,2-diacyl-sn-glycero-3-phosphocholine + H2O = a 1,2-diacyl-sn-glycero-3-phosphate + choline + H(+). In terms of biological role, hydrolyzes glycerol-phospholipids at the terminal phosphodiesteric bond. Plays an important role in various cellular processes. The chain is Phospholipase D alpha 1 from Cynara cardunculus (Cardoon).